We begin with the raw amino-acid sequence, 498 residues long: Probable malate:quinone oxidoreductase (498 aa).

It belongs to the MQO family. FAD serves as cofactor.

The catalysed reaction is (S)-malate + a quinone = a quinol + oxaloacetate. It functions in the pathway carbohydrate metabolism; tricarboxylic acid cycle; oxaloacetate from (S)-malate (quinone route): step 1/1. The sequence is that of Probable malate:quinone oxidoreductase from Prochlorococcus marinus (strain MIT 9301).